Here is a 486-residue protein sequence, read N- to C-terminus: Ribulose bisphosphate carboxylase large chain (486 aa).

Asn-125 and Thr-175 together coordinate substrate. Lys-177 (proton acceptor) is an active-site residue. Residue Lys-179 coordinates substrate. Mg(2+) contacts are provided by Lys-203, Asp-205, and Glu-206. Lys-203 is subject to N6-carboxylysine. His-295 (proton acceptor) is an active-site residue. Substrate contacts are provided by Arg-296, His-328, and Ser-380.

It belongs to the RuBisCO large chain family. Type I subfamily. In terms of assembly, heterohexadecamer of 8 large chains and 8 small chains. Mg(2+) is required as a cofactor.

The enzyme catalyses 2 (2R)-3-phosphoglycerate + 2 H(+) = D-ribulose 1,5-bisphosphate + CO2 + H2O. The catalysed reaction is D-ribulose 1,5-bisphosphate + O2 = 2-phosphoglycolate + (2R)-3-phosphoglycerate + 2 H(+). Functionally, ruBisCO catalyzes two reactions: the carboxylation of D-ribulose 1,5-bisphosphate, the primary event in carbon dioxide fixation, as well as the oxidative fragmentation of the pentose substrate. Both reactions occur simultaneously and in competition at the same active site. This chain is Ribulose bisphosphate carboxylase large chain, found in Cereibacter sphaeroides (Rhodobacter sphaeroides).